Consider the following 239-residue polypeptide: Phosphoribosylaminoimidazole-succinocarboxamide synthase (239 aa).

Belongs to the SAICAR synthetase family.

It catalyses the reaction 5-amino-1-(5-phospho-D-ribosyl)imidazole-4-carboxylate + L-aspartate + ATP = (2S)-2-[5-amino-1-(5-phospho-beta-D-ribosyl)imidazole-4-carboxamido]succinate + ADP + phosphate + 2 H(+). The protein operates within purine metabolism; IMP biosynthesis via de novo pathway; 5-amino-1-(5-phospho-D-ribosyl)imidazole-4-carboxamide from 5-amino-1-(5-phospho-D-ribosyl)imidazole-4-carboxylate: step 1/2. This chain is Phosphoribosylaminoimidazole-succinocarboxamide synthase, found in Bacillus cereus (strain 03BB102).